The primary structure comprises 348 residues: MTQKNFVELRNVTKRFGSNTVIDNINLTIPQGQMVTLLGPSGCGKTTILRLVAGLEKPSEGQIFIDGEDVTHRSIQQRDICMVFQSYALFPHMSLGENVGYGLKMLGVPRAELKARVKEALAMVDLEGFEDRFVDQISGGQQQRVALARALILKPKVLLFDEPLSNLDANLRRSMRDKIRELQKQFDITSLYVTHDQSEAFAVSDTVLVMNKGHIMQIGSPQDLYRQPASRFMASFMGDANLFPATFSDGYVDIYGYHLPRPLHFGTQGEGMVGVRPEAITLSDRGEESQRCVIRHVAYMGPQYEVTVEWHGQEILLQVNATRLQPDVGEQYYLEIHPYGMFVLADAA.

An ABC transporter domain is found at 7 to 237; it reads VELRNVTKRF…PASRFMASFM (231 aa). 39–46 is a binding site for ATP; the sequence is GPSGCGKT.

This sequence belongs to the ABC transporter superfamily. Fe(3+) ion importer (TC 3.A.1.10) family. In terms of assembly, the complex is composed of two ATP-binding proteins (FbpC), two transmembrane proteins (FbpB) and a solute-binding protein (FbpA).

Its subcellular location is the cell inner membrane. It catalyses the reaction Fe(3+)(out) + ATP + H2O = Fe(3+)(in) + ADP + phosphate + H(+). Part of the ABC transporter complex FbpABC involved in Fe(3+) ions import. Responsible for energy coupling to the transport system. This Escherichia coli (strain K12) protein is Fe(3+) ions import ATP-binding protein FbpC.